The chain runs to 337 residues: ATP-dependent 6-phosphofructokinase (337 aa).

Glycine 11 is a binding site for ATP. 21-25 is a binding site for ADP; that stretch reads RAVVR. Residues 72-73 and 102-105 contribute to the ATP site; these read RY and GDGS. Aspartate 103 is a Mg(2+) binding site. Residue 125-127 coordinates substrate; it reads TID. Aspartate 127 functions as the Proton acceptor in the catalytic mechanism. Arginine 154 serves as a coordination point for ADP. Substrate contacts are provided by residues arginine 162 and 169–171; that span reads MGR. ADP is bound by residues 185–187 and 214–216; these read GAD and KNH. Substrate-binding positions include glutamate 223, arginine 245, and 251-254; that span reads HILR.

Belongs to the phosphofructokinase type A (PFKA) family. ATP-dependent PFK group I subfamily. Prokaryotic clade 'B1' sub-subfamily. As to quaternary structure, homotetramer. Mg(2+) serves as cofactor.

The protein localises to the cytoplasm. It carries out the reaction beta-D-fructose 6-phosphate + ATP = beta-D-fructose 1,6-bisphosphate + ADP + H(+). It participates in carbohydrate degradation; glycolysis; D-glyceraldehyde 3-phosphate and glycerone phosphate from D-glucose: step 3/4. Its activity is regulated as follows. Allosterically activated by ADP and other diphosphonucleosides, and allosterically inhibited by phosphoenolpyruvate. Functionally, catalyzes the phosphorylation of D-fructose 6-phosphate to fructose 1,6-bisphosphate by ATP, the first committing step of glycolysis. This is ATP-dependent 6-phosphofructokinase from Streptococcus uberis (strain ATCC BAA-854 / 0140J).